Here is an 898-residue protein sequence, read N- to C-terminus: MNNNNNNNEGVSSSSSSSSSPLPNISSPNLISNSNIENDIEIKKKSNNNNNNIFEGDNSHIYNQFLGEDFNVVHYTSNALKVSSISLSLNTLTSCTRELGQELTENITTNYDDLFKLANNIKELDQLTDTLKLGVSNLEESIQRMKNDISEPYNKVKSHIGQLKRVQDSCELLRKLIRYIQLVKKLKNHLQAGSRDLSKSAQCINEINLLKKDSDLTGINIIDSQVVWIKTCSDQIITISSTLLYQGMENQNQTDVANSLQVFHNMTILNEKVYSIVNLTTEKVIKNIKALLNVNKLIADLPKTTITNNINNNNSNNNITTNNNNNNYNNNNNNNNNNNIISTSTDKSIWLKFESLIDTLYSSLIQILHLQRVLLKIKDPLTHKSLMEVLLIKQHQLQQQQQQQQQQQQQQQQQQQQQQQQQQQVGTTSNNTQPILIEMISTLFWKSILKVLENNLLVAAKSSNIIENTFIREYPKVSKFFLDFIKKLQNYIDIHQMDIQQQFMIVLSNINQIIGNNNSNNSNSNSNNSIESSLSTSSSSSSSSSSSSSTTTTATTSLILLSADDYKLSLFKSIGLFEKAYLEYSQSKMSTIVNGLFPQSTWSSRSTLPVIPNGKQLVDLSKTIWSEIEWLVGNNDRQLLGKLMLVVSKVIDLFSSKIESMVQPPGLIVLNSNIGSSSSTGGVNNNSNSNNNNEIITINENSKPTPSQTVNTLLFNVSIQLNSSIQSLLTSQPLERESIIVIEKSLNSLITICTNIITPLMNSFFTHIEQIFSTIHNEDWYNEKTTKMLINKSNQTCSSYMESFKTLVNYFQNQYLMRFTPCQLLNNQIKSMISKIFIVYLKYCSLLKQPFSENGKLKMVNDLTHLEFAVTPLLVSGGIKEIGESYNLIRNYKQSIFN.

A disordered region spans residues 1-30 (MNNNNNNNEGVSSSSSSSSSPLPNISSPNL). Residues 129–192 (DTLKLGVSNL…VKKLKNHLQA (64 aa)) adopt a coiled-coil conformation. Disordered regions lie at residues 311–339 (NNNN…NNNN), 519–551 (SNNS…SSTT), and 679–705 (STGG…SKPT). Residues 679-702 (STGGVNNNSNSNNNNEIITINENS) show a composition bias toward low complexity.

The protein resides in the golgi apparatus membrane. This Dictyostelium discoideum (Social amoeba) protein is Conserved oligomeric Golgi complex subunit 5 (cog5).